A 215-amino-acid polypeptide reads, in one-letter code: Pyrrolidone-carboxylate peptidase (215 aa).

Catalysis depends on residues glutamate 80, cysteine 143, and histidine 167.

This sequence belongs to the peptidase C15 family. Homotetramer.

Its subcellular location is the cytoplasm. The catalysed reaction is Release of an N-terminal pyroglutamyl group from a polypeptide, the second amino acid generally not being Pro.. Its function is as follows. Removes 5-oxoproline from various penultimate amino acid residues except L-proline. This is Pyrrolidone-carboxylate peptidase from Bacillus cereus (strain ATCC 10987 / NRS 248).